We begin with the raw amino-acid sequence, 154 residues long: Large-conductance mechanosensitive channel (154 aa).

Helical transmembrane passes span 14 to 34 (VVDL…VNSL) and 86 to 106 (VFIN…FFVV).

The protein belongs to the MscL family. Homopentamer.

It is found in the cell membrane. In terms of biological role, channel that opens in response to stretch forces in the membrane lipid bilayer. May participate in the regulation of osmotic pressure changes within the cell. The chain is Large-conductance mechanosensitive channel from Dehalococcoides mccartyi (strain ATCC BAA-2100 / JCM 16839 / KCTC 5957 / BAV1).